We begin with the raw amino-acid sequence, 388 residues long: MTNINRIGLTWISFLSYAFTGALVVVTGMIMGNISNYFHLSISQMSNIFTFLNAGILVSIFINSWLIEIISLKKQLIFSFILTIIAVIGIVLCNSIFLFSINMFILGLVSGITMSIGTFIITHLYSGSKRGSLLLLTDSFFSMSGMIFPIVTAYLLEKKIIWYWSYICIGAIYLLIFLLTINSSFEKFKTNTKNSKETKEKWNFNVFLLSISALLYILGQLGFISWVPQYATEIMNIDIKKTGSLVSGFWMSYMLGMWFFSFIIKFFNLYRMFIFLTSMSTILMYCFIKSENFLNQQYIIISLGFFSSAIYTIIITLASLQTKHPSPKLINLILLFGTIGTFLTFIITSPIVEAKGLYVTLISSNILYGIVFFLSILIYFNKKYERVI.

12 helical membrane-spanning segments follow: residues 11–31, 50–70, 77–97, 101–121, 133–153, 160–180, 206–226, 244–264, 268–288, 298–318, 332–352, and 360–380; these read WISFLSYAFTGALVVVTGMIM, TFLNAGILVSIFINSWLIEII, IFSFILTIIAVIGIVLCNSIF, INMFILGLVSGITMSIGTFII, LLLLTDSFFSMSGMIFPIVTA, IIWYWSYICIGAIYLLIFLLT, VFLLSISALLYILGQLGFISW, SLVSGFWMSYMLGMWFFSFII, NLYRMFIFLTSMSTILMYCFI, YIIISLGFFSSAIYTIIITLA, LILLFGTIGTFLTFIITSPIV, and TLISSNILYGIVFFLSILIYF.

This sequence belongs to the major facilitator superfamily. TsgA family.

It localises to the cell membrane. The chain is Protein TsgA homolog from Buchnera aphidicola subsp. Acyrthosiphon pisum (strain 5A).